Consider the following 157-residue polypeptide: Glutaredoxin-2, mitochondrial (157 aa).

A mitochondrion-targeting transit peptide spans 1-18 (MYWRRAALVGTRLIPVRS). Residue serine 20 is modified to Phosphoserine. Residues 51–151 (VNQIQETISN…PLVHQCHLKN (101 aa)) enclose the Glutaredoxin domain. Cysteine 62 is a [2Fe-2S] cluster binding site. Lysine 68 is a glutathione binding site. Residue cysteine 71 is modified to S-glutathionyl cysteine; alternate. Cysteine 71 and cysteine 74 are oxidised to a cystine. The glutathione site is built by glutamine 103 and valine 115. Cysteine 147 contacts [2Fe-2S] cluster.

This sequence belongs to the glutaredoxin family. In terms of assembly, monomer; active form. Homodimer; inactive form. The homodimer is probably linked by 1 2Fe-2S cluster.

It localises to the mitochondrion. Its activity is regulated as follows. The 2Fe-2S present in the homodimer leads to inactivation of the enzyme. The 2Fe-2S may serve as a redox sensor: the presence of one-electron oxidants or reductants leading to the loss of the 2Fe-2S cluster, subsequent monomerization and activation of the enzyme. In terms of biological role, glutathione-dependent oxidoreductase that facilitates the maintenance of mitochondrial redox homeostasis upon induction of apoptosis by oxidative stress. Involved in response to hydrogen peroxide and regulation of apoptosis caused by oxidative stress. Acts as a very efficient catalyst of monothiol reactions because of its high affinity for protein glutathione-mixed disulfides. Can receive electrons not only from glutathione (GSH), but also from thioredoxin reductase supporting both monothiol and dithiol reactions. Efficiently catalyzes both glutathionylation and deglutathionylation of mitochondrial complex I, which in turn regulates the superoxide production by the complex. Overexpression decreases the susceptibility to apoptosis and prevents loss of cardiolipin and cytochrome c release. The chain is Glutaredoxin-2, mitochondrial (GLRX2) from Bos taurus (Bovine).